The primary structure comprises 96 residues: Small ribosomal subunit protein bS18 (96 aa).

The protein belongs to the bacterial ribosomal protein bS18 family. As to quaternary structure, part of the 30S ribosomal subunit. Forms a tight heterodimer with protein bS6.

Functionally, binds as a heterodimer with protein bS6 to the central domain of the 16S rRNA, where it helps stabilize the platform of the 30S subunit. This Borreliella afzelii (strain PKo) (Borrelia afzelii) protein is Small ribosomal subunit protein bS18.